The following is a 380-amino-acid chain: WAT1-related protein At2g37460 (380 aa).

10 helical membrane passes run 16-36 (FISMVVLQVGLAGMDILSKAV), 45-65 (VLVVYRHAVATIVMAPFAFYF), 71-91 (PKMTLMIFFKISLLGLLEPVI), 107-127 (FATAMYNVLPAITFVLAYIFG), 142-162 (VVGTLATVGGAMIMTLVKGPV), 187-207 (GAVLVTIGCFSYACFMILQAI), 216-236 (LSLTAWICLMGTIEGTAVALV), 254-274 (LTATYSGIVCSALAYYVGGVV), 282-302 (FVTAFSPLCMIIVAIMSTIIF), and 306-326 (MYLGRVLGAVVICAGLYLVIW). The EamA 1 domain occupies 27–134 (AGMDILSKAV…IFGLERVKLR (108 aa)). Residues 196–325 (FSYACFMILQ…VICAGLYLVI (130 aa)) form the EamA 2 domain.

The protein belongs to the drug/metabolite transporter (DMT) superfamily. Plant drug/metabolite exporter (P-DME) (TC 2.A.7.4) family.

Its subcellular location is the membrane. This is WAT1-related protein At2g37460 from Arabidopsis thaliana (Mouse-ear cress).